The chain runs to 125 residues: Phosphoribosyl-AMP cyclohydrolase (125 aa).

Aspartate 74 lines the Mg(2+) pocket. Cysteine 75 provides a ligand contact to Zn(2+). The Mg(2+) site is built by aspartate 76 and aspartate 78. Zn(2+) contacts are provided by cysteine 92 and cysteine 99.

The protein belongs to the PRA-CH family. As to quaternary structure, homodimer. The cofactor is Mg(2+). Requires Zn(2+) as cofactor.

It is found in the cytoplasm. It catalyses the reaction 1-(5-phospho-beta-D-ribosyl)-5'-AMP + H2O = 1-(5-phospho-beta-D-ribosyl)-5-[(5-phospho-beta-D-ribosylamino)methylideneamino]imidazole-4-carboxamide. Its pathway is amino-acid biosynthesis; L-histidine biosynthesis; L-histidine from 5-phospho-alpha-D-ribose 1-diphosphate: step 3/9. Its function is as follows. Catalyzes the hydrolysis of the adenine ring of phosphoribosyl-AMP. The polypeptide is Phosphoribosyl-AMP cyclohydrolase (Syntrophotalea carbinolica (strain DSM 2380 / NBRC 103641 / GraBd1) (Pelobacter carbinolicus)).